The sequence spans 305 residues: N-acetylmuramic acid 6-phosphate etherase (305 aa).

The SIS domain maps to Ile-61–Lys-224. Glu-89 (proton donor) is an active-site residue. Glu-120 is an active-site residue.

Belongs to the GCKR-like family. MurNAc-6-P etherase subfamily. Homodimer.

It carries out the reaction N-acetyl-D-muramate 6-phosphate + H2O = N-acetyl-D-glucosamine 6-phosphate + (R)-lactate. It participates in amino-sugar metabolism; N-acetylmuramate degradation. Its function is as follows. Specifically catalyzes the cleavage of the D-lactyl ether substituent of MurNAc 6-phosphate, producing GlcNAc 6-phosphate and D-lactate. The polypeptide is N-acetylmuramic acid 6-phosphate etherase (Synechocystis sp. (strain ATCC 27184 / PCC 6803 / Kazusa)).